Consider the following 349-residue polypeptide: Phosphoribosylformylglycinamidine cyclo-ligase (349 aa).

It belongs to the AIR synthase family.

The protein localises to the cytoplasm. The catalysed reaction is 2-formamido-N(1)-(5-O-phospho-beta-D-ribosyl)acetamidine + ATP = 5-amino-1-(5-phospho-beta-D-ribosyl)imidazole + ADP + phosphate + H(+). Its pathway is purine metabolism; IMP biosynthesis via de novo pathway; 5-amino-1-(5-phospho-D-ribosyl)imidazole from N(2)-formyl-N(1)-(5-phospho-D-ribosyl)glycinamide: step 2/2. The protein is Phosphoribosylformylglycinamidine cyclo-ligase of Bordetella avium (strain 197N).